A 329-amino-acid chain; its full sequence is Capsular polysaccharide phosphotransferase WcwK (329 aa).

Belongs to the stealth family.

The polypeptide is Capsular polysaccharide phosphotransferase WcwK (wcwK) (Streptococcus pneumoniae).